The chain runs to 536 residues: 3',5'-cyclic-AMP phosphodiesterase 4C (536 aa).

Residues 49–69 form a disordered region; sequence QALLGTPPQSSQQAAPAEESG. The region spanning 178–507 is the PDEase domain; sequence VQTDQEEQLA…EWYQSRVPCS (330 aa). Residue His-254 is the Proton donor of the active site. Position 254 (His-254) interacts with 3',5'-cyclic AMP. AMP is bound by residues His-254 and His-258. His-258, His-294, Asp-295, and Asp-412 together coordinate Zn(2+). Asp-295, Asp-412, Gln-463, and Phe-466 together coordinate AMP. Asp-295 serves as a coordination point for Mg(2+). Residue Asp-295 coordinates Mn(2+). 3',5'-cyclic AMP is bound by residues Gln-463 and Phe-466. Ser-507 is subject to Phosphoserine.

This sequence belongs to the cyclic nucleotide phosphodiesterase family. PDE4 subfamily. Part of a complex containing AKAP5, ADCY5, ADCY6 and PKD2. The cofactor is Zn(2+). Mg(2+) serves as cofactor. Requires Mn(2+) as cofactor.

It localises to the cell projection. It is found in the cilium. It catalyses the reaction 3',5'-cyclic AMP + H2O = AMP + H(+). The protein operates within purine metabolism; 3',5'-cyclic AMP degradation; AMP from 3',5'-cyclic AMP: step 1/1. Its function is as follows. Hydrolyzes the second messenger cAMP, which is a key regulator of many important physiological processes. In Rattus norvegicus (Rat), this protein is 3',5'-cyclic-AMP phosphodiesterase 4C.